The following is a 229-amino-acid chain: Carbonic anhydrase 2 (229 aa).

Residues C42, D44, H98, and C101 each coordinate Zn(2+).

Belongs to the beta-class carbonic anhydrase family. It depends on Zn(2+) as a cofactor.

The catalysed reaction is hydrogencarbonate + H(+) = CO2 + H2O. The sequence is that of Carbonic anhydrase 2 (can) from Haemophilus influenzae (strain ATCC 51907 / DSM 11121 / KW20 / Rd).